The primary structure comprises 309 residues: Glycine-rich RNA-binding protein 3, mitochondrial (309 aa).

Residues 1–37 (MAFLSKFGNILKQTTNKQLNAQVSLSSPSLFQAIRCM) constitute a mitochondrion transit peptide. In terms of domain architecture, RRM spans 40 to 118 (SKLFIGGMAY…RVVKVNYAND (79 aa)). The tract at residues 247–309 (FAGDSQFGGS…GEFEDVAKRA (63 aa)) is disordered. The span at 258 to 273 (VGNSSQFGGDNTQFTA) shows a compositional bias: polar residues.

It belongs to the GR-RBP family. Homodimer. Interacts with ORRM2 and MORF8/RIP1. Interacts with RBG5/ORRM4. Binds to RBG2/ORRM5.

Its subcellular location is the mitochondrion. Functionally, possibly has a role in RNA transcription or processing during stress. Involved in C-to-U editing of mitochondrial RNA. Functions as a minor mitochondrial editing factor. Controls 6 percent of the mitochondrial editing sites. The chain is Glycine-rich RNA-binding protein 3, mitochondrial from Arabidopsis thaliana (Mouse-ear cress).